We begin with the raw amino-acid sequence, 365 residues long: Ribosomal RNA large subunit methyltransferase M (365 aa).

S-adenosyl-L-methionine is bound by residues Ser-194, 227-230, Asp-246, Asp-266, and Asp-284; that span reads CPGG. Catalysis depends on Lys-313, which acts as the Proton acceptor.

Belongs to the class I-like SAM-binding methyltransferase superfamily. RNA methyltransferase RlmE family. RlmM subfamily. As to quaternary structure, monomer.

The protein resides in the cytoplasm. It catalyses the reaction cytidine(2498) in 23S rRNA + S-adenosyl-L-methionine = 2'-O-methylcytidine(2498) in 23S rRNA + S-adenosyl-L-homocysteine + H(+). In terms of biological role, catalyzes the 2'-O-methylation at nucleotide C2498 in 23S rRNA. This Pasteurella multocida (strain Pm70) protein is Ribosomal RNA large subunit methyltransferase M.